Here is a 309-residue protein sequence, read N- to C-terminus: ADP-L-glycero-D-manno-heptose-6-epimerase (309 aa).

NADP(+) contacts are provided by residues 10 to 11 (LI), 31 to 32 (DN), Lys38, Lys53, 75 to 79 (QGACS), and Asn92. The active-site Proton acceptor is the Tyr139. Residue Lys143 participates in NADP(+) binding. Residue Asn168 participates in substrate binding. NADP(+) contacts are provided by Val169 and Lys177. The active-site Proton acceptor is the Lys177. Residues Ser179, His186, 200–203 (FAGS), Arg208, and Tyr271 contribute to the substrate site.

The protein belongs to the NAD(P)-dependent epimerase/dehydratase family. HldD subfamily. Homopentamer. It depends on NADP(+) as a cofactor.

It carries out the reaction ADP-D-glycero-beta-D-manno-heptose = ADP-L-glycero-beta-D-manno-heptose. Its pathway is nucleotide-sugar biosynthesis; ADP-L-glycero-beta-D-manno-heptose biosynthesis; ADP-L-glycero-beta-D-manno-heptose from D-glycero-beta-D-manno-heptose 7-phosphate: step 4/4. Its function is as follows. Catalyzes the interconversion between ADP-D-glycero-beta-D-manno-heptose and ADP-L-glycero-beta-D-manno-heptose via an epimerization at carbon 6 of the heptose. This Histophilus somni (strain 2336) (Haemophilus somnus) protein is ADP-L-glycero-D-manno-heptose-6-epimerase.